Here is a 371-residue protein sequence, read N- to C-terminus: Queuine tRNA-ribosyltransferase (371 aa).

D93 acts as the Proton acceptor in catalysis. Substrate contacts are provided by residues 93–97 (DSGGF), D147, Q191, and G218. The segment at 249–255 (GVGTVVD) is RNA binding. D268 serves as the catalytic Nucleophile. The interval 273-277 (TRNAR) is RNA binding; important for wobble base 34 recognition. Positions 306, 308, 311, and 337 each coordinate Zn(2+).

Belongs to the queuine tRNA-ribosyltransferase family. As to quaternary structure, homodimer. Within each dimer, one monomer is responsible for RNA recognition and catalysis, while the other monomer binds to the replacement base PreQ1. Requires Zn(2+) as cofactor.

The catalysed reaction is 7-aminomethyl-7-carbaguanine + guanosine(34) in tRNA = 7-aminomethyl-7-carbaguanosine(34) in tRNA + guanine. It participates in tRNA modification; tRNA-queuosine biosynthesis. Catalyzes the base-exchange of a guanine (G) residue with the queuine precursor 7-aminomethyl-7-deazaguanine (PreQ1) at position 34 (anticodon wobble position) in tRNAs with GU(N) anticodons (tRNA-Asp, -Asn, -His and -Tyr). Catalysis occurs through a double-displacement mechanism. The nucleophile active site attacks the C1' of nucleotide 34 to detach the guanine base from the RNA, forming a covalent enzyme-RNA intermediate. The proton acceptor active site deprotonates the incoming PreQ1, allowing a nucleophilic attack on the C1' of the ribose to form the product. After dissociation, two additional enzymatic reactions on the tRNA convert PreQ1 to queuine (Q), resulting in the hypermodified nucleoside queuosine (7-(((4,5-cis-dihydroxy-2-cyclopenten-1-yl)amino)methyl)-7-deazaguanosine). This is Queuine tRNA-ribosyltransferase from Leptospira biflexa serovar Patoc (strain Patoc 1 / Ames).